The chain runs to 205 residues: Outer-membrane lipoprotein carrier protein (205 aa).

The N-terminal stretch at 1–22 is a signal peptide; it reads MKKTTLKFAALTLLGLSNLALA.

This sequence belongs to the LolA family. Monomer.

The protein localises to the periplasm. Functionally, participates in the translocation of lipoproteins from the inner membrane to the outer membrane. Only forms a complex with a lipoprotein if the residue after the N-terminal Cys is not an aspartate (The Asp acts as a targeting signal to indicate that the lipoprotein should stay in the inner membrane). This Haemophilus influenzae (strain PittEE) protein is Outer-membrane lipoprotein carrier protein.